The chain runs to 240 residues: UDP-2,3-diacylglucosamine hydrolase (240 aa).

D8, H10, D41, N78, and H113 together coordinate Mn(2+). Position 78–79 (78–79 (NR)) interacts with substrate. Substrate contacts are provided by D121, S159, N163, K166, and H194. Residues H194 and H196 each contribute to the Mn(2+) site.

This sequence belongs to the LpxH family. Mn(2+) is required as a cofactor.

It is found in the cell inner membrane. The catalysed reaction is UDP-2-N,3-O-bis[(3R)-3-hydroxytetradecanoyl]-alpha-D-glucosamine + H2O = 2-N,3-O-bis[(3R)-3-hydroxytetradecanoyl]-alpha-D-glucosaminyl 1-phosphate + UMP + 2 H(+). It participates in glycolipid biosynthesis; lipid IV(A) biosynthesis; lipid IV(A) from (3R)-3-hydroxytetradecanoyl-[acyl-carrier-protein] and UDP-N-acetyl-alpha-D-glucosamine: step 4/6. In terms of biological role, hydrolyzes the pyrophosphate bond of UDP-2,3-diacylglucosamine to yield 2,3-diacylglucosamine 1-phosphate (lipid X) and UMP by catalyzing the attack of water at the alpha-P atom. Involved in the biosynthesis of lipid A, a phosphorylated glycolipid that anchors the lipopolysaccharide to the outer membrane of the cell. This chain is UDP-2,3-diacylglucosamine hydrolase, found in Shewanella baltica (strain OS223).